We begin with the raw amino-acid sequence, 201 residues long: Small ribosomal subunit protein uS4 (201 aa).

The region spanning 91 to 157 (CRLDNVVYRA…TPFIIAKETI (67 aa)) is the S4 RNA-binding domain.

It belongs to the universal ribosomal protein uS4 family. As to quaternary structure, part of the 30S ribosomal subunit. Contacts protein S5. The interaction surface between S4 and S5 is involved in control of translational fidelity.

In terms of biological role, one of the primary rRNA binding proteins, it binds directly to 16S rRNA where it nucleates assembly of the body of the 30S subunit. Its function is as follows. With S5 and S12 plays an important role in translational accuracy. This Saccharopolyspora erythraea (strain ATCC 11635 / DSM 40517 / JCM 4748 / NBRC 13426 / NCIMB 8594 / NRRL 2338) protein is Small ribosomal subunit protein uS4.